Consider the following 292-residue polypeptide: Protein LicB (292 aa).

EamA domains follow at residues 70–139 (ALSG…LLAI) and 160–286 (LGWS…VTLY).

This chain is Protein LicB (licB), found in Haemophilus influenzae (strain ATCC 51907 / DSM 11121 / KW20 / Rd).